The following is a 69-amino-acid chain: Mitotic-spindle organizing protein 1 (69 aa).

This sequence belongs to the MOZART1 family. As to quaternary structure, part of the gamma-tubulin complex.

Its subcellular location is the cytoplasm. The protein resides in the cytoskeleton. The protein localises to the microtubule organizing center. It localises to the spindle. Functionally, required for gamma-tubulin complex recruitment to the microtubule organizing centers (MTOCs). The sequence is that of Mitotic-spindle organizing protein 1 from Picea sitchensis (Sitka spruce).